A 146-amino-acid polypeptide reads, in one-letter code: uncharacterized protein (146 aa).

This is an uncharacterized protein from Methanothermobacter thermautotrophicus (Methanobacterium thermoformicicum).